A 476-amino-acid chain; its full sequence is UDP-N-acetylmuramate--L-alanine ligase (476 aa).

Position 121 to 127 (121 to 127 (GAHGKTT)) interacts with ATP.

The protein belongs to the MurCDEF family.

It is found in the cytoplasm. The enzyme catalyses UDP-N-acetyl-alpha-D-muramate + L-alanine + ATP = UDP-N-acetyl-alpha-D-muramoyl-L-alanine + ADP + phosphate + H(+). It functions in the pathway cell wall biogenesis; peptidoglycan biosynthesis. Cell wall formation. This is UDP-N-acetylmuramate--L-alanine ligase from Clavibacter sepedonicus (Clavibacter michiganensis subsp. sepedonicus).